The sequence spans 117 residues: Aspartate 1-decarboxylase (117 aa).

Ser-25 (schiff-base intermediate with substrate; via pyruvic acid) is an active-site residue. Pyruvic acid (Ser) is present on Ser-25. Residue Thr-57 participates in substrate binding. The active-site Proton donor is the Tyr-58. 73 to 75 (GAA) is a binding site for substrate.

It belongs to the PanD family. Heterooctamer of four alpha and four beta subunits. Pyruvate serves as cofactor. Post-translationally, is synthesized initially as an inactive proenzyme, which is activated by self-cleavage at a specific serine bond to produce a beta-subunit with a hydroxyl group at its C-terminus and an alpha-subunit with a pyruvoyl group at its N-terminus.

The protein resides in the cytoplasm. The enzyme catalyses L-aspartate + H(+) = beta-alanine + CO2. It participates in cofactor biosynthesis; (R)-pantothenate biosynthesis; beta-alanine from L-aspartate: step 1/1. Functionally, catalyzes the pyruvoyl-dependent decarboxylation of aspartate to produce beta-alanine. This is Aspartate 1-decarboxylase from Bacteroides fragilis (strain ATCC 25285 / DSM 2151 / CCUG 4856 / JCM 11019 / LMG 10263 / NCTC 9343 / Onslow / VPI 2553 / EN-2).